Reading from the N-terminus, the 121-residue chain is Natriuretic peptides B (121 aa).

The first 26 residues, Met-1–Ser-26, serve as a signal peptide directing secretion. An intrachain disulfide couples Cys-99 to Cys-115.

The protein belongs to the natriuretic peptide family. The precursor molecule is proteolytically cleaved by the endoprotease Furin to produce brain natriuretic peptide 45. May undergo further proteolytic cleavage by various proteases such as DPP4, MME and possibly FAP, to give rise to a variety of shorter peptides. May be cleaved at Ser-91 by the prolyl endopeptidase FAP (seprase) activity (in vitro). May be degraded by IDE. During IDE degradation, the resulting products initially increase the activation of NPR1 and can also stimulate NPR2 to produce cGMP before the fragments are completely degraded and inactivated by IDE (in vitro). As to expression, expressed in the atria and ventricles, but at much lower levels than NPPA. Expression levels in the ventricles are slightly higher than in the atria. Very low levels of expression detected in the brain, hypothalamus, lung and aorta. Atria (at protein level). Cardiocytes (at protein level).

It localises to the secreted. Cardiac hormone that plays a key role in mediating cardio-renal homeostasis. May also function as a paracrine antifibrotic factor in the heart. Acts by specifically binding and stimulating NPR1 to produce cGMP, which in turn activates effector proteins that drive various biological responses. Likely involved in regulating the extracellular fluid volume and maintaining the fluid-electrolyte balance through natriuresis, diuresis, kaluresis and chloruresis. The sequence is that of Natriuretic peptides B (Nppb) from Rattus norvegicus (Rat).